We begin with the raw amino-acid sequence, 407 residues long: Multifunctional CCA protein (407 aa).

ATP-binding residues include G8 and R11. G8 and R11 together coordinate CTP. Mg(2+) contacts are provided by D21 and D23. ATP contacts are provided by R91, R137, and R140. Positions 91, 137, and 140 each coordinate CTP. Residues 228–329 (TGIHTLMVAQ…IKIFDKMDVW (102 aa)) enclose the HD domain.

The protein belongs to the tRNA nucleotidyltransferase/poly(A) polymerase family. Bacterial CCA-adding enzyme type 1 subfamily. In terms of assembly, monomer. Can also form homodimers and oligomers. The cofactor is Mg(2+). Ni(2+) is required as a cofactor.

The enzyme catalyses a tRNA precursor + 2 CTP + ATP = a tRNA with a 3' CCA end + 3 diphosphate. The catalysed reaction is a tRNA with a 3' CCA end + 2 CTP + ATP = a tRNA with a 3' CCACCA end + 3 diphosphate. In terms of biological role, catalyzes the addition and repair of the essential 3'-terminal CCA sequence in tRNAs without using a nucleic acid template. Adds these three nucleotides in the order of C, C, and A to the tRNA nucleotide-73, using CTP and ATP as substrates and producing inorganic pyrophosphate. tRNA 3'-terminal CCA addition is required both for tRNA processing and repair. Also involved in tRNA surveillance by mediating tandem CCA addition to generate a CCACCA at the 3' terminus of unstable tRNAs. While stable tRNAs receive only 3'-terminal CCA, unstable tRNAs are marked with CCACCA and rapidly degraded. The chain is Multifunctional CCA protein from Aliivibrio fischeri (strain ATCC 700601 / ES114) (Vibrio fischeri).